A 175-amino-acid chain; its full sequence is Apoptosis regulator Bcl-2 homolog (175 aa).

A mediates interaction with human NOP53 and localization to host nucleolus region spans residues 37 to 42; it reads KLYITG. A helical membrane pass occupies residues 153 to 173; sequence MTALLGSIALLATILAAVAMS.

The protein belongs to the Bcl-2 family. Interacts with human NOP53; may sequester ORF16 in host nucleolus and reduce its antiapoptotic activity. Interacts with ORF55.

It localises to the host membrane. The protein localises to the host mitochondrion. Its subcellular location is the host nucleus. The protein resides in the host nucleolus. Functionally, plays a role in the protection against apoptosis mediated by cytotoxic cells during the immune response to acute and persistent viral infection. Contributes therefore to latency establishment. Also plays a role in the inhibition of host starvation-induced autophagy which ultimately contributes to the viral chronic infection. Also participates in the viral genome replication within host nucleus. The polypeptide is Apoptosis regulator Bcl-2 homolog (vBCL2) (Homo sapiens (Human)).